Here is a 207-residue protein sequence, read N- to C-terminus: Granulocyte colony-stimulating factor (207 aa).

The N-terminal stretch at 1 to 30 is a signal peptide; it reads MAGPATQSPMKLMALQLLLWHSALWTVQEA. 2 disulfide bridges follow: Cys-69-Cys-75 and Cys-97-Cys-107. Thr-166 carries O-linked (GalNAc...) threonine glycosylation.

It belongs to the IL-6 superfamily. Monomer. In terms of processing, O-glycan consists of Gal-GalNAc disaccharide which can be modified with up to two sialic acid residues (done in recombinantly expressed G-CSF from CHO cells).

The protein localises to the secreted. Granulocyte/macrophage colony-stimulating factors are cytokines that act in hematopoiesis by controlling the production, differentiation, and function of 2 related white cell populations of the blood, the granulocytes and the monocytes-macrophages. This CSF induces granulocytes. This chain is Granulocyte colony-stimulating factor (CSF3), found in Homo sapiens (Human).